The following is a 146-amino-acid chain: Probable trivalent organoarsenical cleaving enzyme (146 aa).

In terms of domain architecture, VOC spans 2–118; it reads KYVHVGVNVV…DGNEWEFFYT (117 aa). Fe(2+) contacts are provided by histidine 5 and histidine 62. Roxarsone (III) contacts are provided by cysteine 95 and cysteine 96. Glutamate 114 lines the Fe(2+) pocket.

To M.tuberculosis Rv2641. Fe(2+) serves as cofactor.

The catalysed reaction is methylarsonous acid + AH2 + O2 = arsenite + methanol + A + H(+). The enzyme catalyses roxarsone (III) + AH2 + O2 = 4-hydroxy-3-nitrocyclohexa-2,5-dien-1-one + arsenite + A + H(+). It catalyses the reaction nitarsone (III) + AH2 + O2 = 4-nitrocyclohexa-2,5-dien-1-one + arsenite + A + H(+). It carries out the reaction 4-aminophenylarsonous acid + AH2 + O2 = 4-aminocyclohexa-2,5-dien-1-one + arsenite + A. Nonheme iron-dependent dioxygenase that can break carbon-arsenic bonds, playing a role in the detoxification of environmental organoarsenical compounds. Catalyzes the oxygen-dependent demethylation of highly toxic methylarsonous acid (MAs(III)) to arsenite, which can then be exported out of the cell. Can also cleave the C-As bond in several trivalent aromatic arsenicals, including roxarsone (III), nitarsone (III) and (4-aminophenyl)arsonous acid. Organoarsenical degradation by this enzyme is proposed to have a significant impact on the arsenic biogeocycle that maintains a balance between organic and inorganic species. The protein is Probable trivalent organoarsenical cleaving enzyme (yqcK) of Bacillus subtilis (strain 168).